The sequence spans 414 residues: Na(+)/H(+) antiporter NhaA (414 aa).

Transmembrane regions (helical) follow at residues 22–42, 61–81, 101–121, 131–151, 171–191, 215–235, 239–259, 281–301, 308–328, 343–363, and 379–399; these read VGGF…NSPF, LHLT…FFVV, MLPI…YAAF, GWGI…AVVG, LGAI…LPLI, SAAL…WALV, GVHA…VPLA, VLPV…LGAV, LGII…GSWV, WIDI…SLLI, and KAGV…VLAV.

It belongs to the NhaA Na(+)/H(+) (TC 2.A.33) antiporter family.

It localises to the cell membrane. It catalyses the reaction Na(+)(in) + 2 H(+)(out) = Na(+)(out) + 2 H(+)(in). Functionally, na(+)/H(+) antiporter that extrudes sodium in exchange for external protons. The sequence is that of Na(+)/H(+) antiporter NhaA from Thermobifida fusca (strain YX).